The chain runs to 401 residues: Methyltransferase cfoC (401 aa).

An S-adenosyl-L-methionine-binding site is contributed by Asp268. His308 acts as the Proton acceptor in catalysis.

The protein belongs to the class I-like SAM-binding methyltransferase superfamily. Cation-independent O-methyltransferase family.

The protein operates within secondary metabolite biosynthesis; flavonoid biosynthesis. Methyltransferase; part of the gene cluster that mediates the biosynthesis of chlorflavonin, a fungal flavonoid with acetolactate synthase inhibitory activity. Within the pathway, cfoC is responsible for the methylation at position C8-OH of flavonoid. The pathway begins with the PKS-NRPS hybrid synthetase cfoA that uses benzoic acid or p-hydroxybenzoic acid as a starter unit with four rounds of chain elongation using malonyl-CoA to form the chalcone skeleton. Then, a new type of chalcone isomerase, cfoK, catalyzes the conversion of the chalcone into a flavanone by a histidine-mediated oxa-Michael addition mechanism. The desaturation of flavanone to flavone is catalyzed by a new type of flavone synthase, the flavin mononucleotide (FMN)-dependent oxidoreductase cfoJ. Monooxygenases cfoF, cfoG, and P450 cfoH are responsible for the hydroxylation of the flavonoid skeleton at sites C3, C8, and C2', respectively. Like cfoF, the dehydratase cfoI also plays a role in the hydroxylation of position C3. Methyltransferases cfoB, cfoC, and cfoD then catalyze the methylation of C7-OH, C8-OH, and C3-OH, respectively. Finally, the monooxygenase cfoE is responsible for the chlorination of flavonoid at position C3'. This Aspergillus candidus protein is Methyltransferase cfoC.